The chain runs to 37 residues: Large ribosomal subunit protein bL36c (37 aa).

This sequence belongs to the bacterial ribosomal protein bL36 family.

Its subcellular location is the plastid. It localises to the chloroplast. This is Large ribosomal subunit protein bL36c (rpl36) from Chlamydomonas reinhardtii (Chlamydomonas smithii).